Reading from the N-terminus, the 512-residue chain is Glutamyl-tRNA(Gln) amidotransferase subunit A (512 aa).

Active-site charge relay system residues include Lys-82 and Ser-157. Ser-181 acts as the Acyl-ester intermediate in catalysis.

This sequence belongs to the amidase family. GatA subfamily. Heterotrimer of A, B and C subunits.

The catalysed reaction is L-glutamyl-tRNA(Gln) + L-glutamine + ATP + H2O = L-glutaminyl-tRNA(Gln) + L-glutamate + ADP + phosphate + H(+). Its function is as follows. Allows the formation of correctly charged Gln-tRNA(Gln) through the transamidation of misacylated Glu-tRNA(Gln) in organisms which lack glutaminyl-tRNA synthetase. The reaction takes place in the presence of glutamine and ATP through an activated gamma-phospho-Glu-tRNA(Gln). The chain is Glutamyl-tRNA(Gln) amidotransferase subunit A from Bordetella pertussis (strain Tohama I / ATCC BAA-589 / NCTC 13251).